The sequence spans 295 residues: MGLFAVIDIGGTSIKYGVINEDGTLLETNDRDTEAYKGGLSIIEKVKDIIHELKINNDISGICVSTAGMVCPKEGKIVYAGPTIPNYTGVEVKKILEEEFNLPCFVENDVNCAALGEFFGGAGKGTHSMACLTIGTGIGGALIIDGKVLHGFSNSAGEIGYMMVNGEHIQDIASASALVKNVALRKGVEPSSIDGRYVLDNYENGDLICKEEVEKLADNLALGISNIVYLINPEVVVLGGGIMAREEVFRPLIENSLRKYLIESVYNNTKIAFAKLKNTAGMKGAYYNFKENFNK.

This sequence belongs to the ROK (NagC/XylR) family.

This is an uncharacterized protein from Clostridium perfringens (strain 13 / Type A).